The following is a 392-amino-acid chain: Protein FAM53C (392 aa).

Met-1 bears the N-acetylmethionine mark. Positions 77-120 are disordered; that stretch reads HLRPPSRGSSPKEQPLSQVLRPEPPDPEKLPVPPAPPSKRHCRS. Positions 83 to 93 are enriched in polar residues; the sequence is RGSSPKEQPLS. Ser-122 and Ser-162 each carry phosphoserine. Disordered stretches follow at residues 141 to 167, 203 to 303, and 340 to 364; these read LWTPIKHRGSGGGGGPQVPHQSPPKRV, SRPC…LDFD, and SASCSPTGGSSQVLSESEEEEEGAV. Residues 203-215 are compositionally biased toward polar residues; the sequence is SRPCATSPQSGSW. Phosphoserine occurs at positions 232, 234, 255, 273, and 299. Positions 241-256 are enriched in low complexity; it reads ASRFLPSARSSPASSP. A compositionally biased stretch (basic and acidic residues) spans 278-303; that stretch reads LDARKTGVKRRHEEDPRRLRPSLDFD.

The protein belongs to the FAM53 family.

This chain is Protein FAM53C, found in Pongo abelii (Sumatran orangutan).